The sequence spans 238 residues: Ribonuclease PH (238 aa).

Phosphate-binding positions include arginine 86 and 124 to 126; that span reads GTR.

It belongs to the RNase PH family. Homohexameric ring arranged as a trimer of dimers.

It catalyses the reaction tRNA(n+1) + phosphate = tRNA(n) + a ribonucleoside 5'-diphosphate. Its function is as follows. Phosphorolytic 3'-5' exoribonuclease that plays an important role in tRNA 3'-end maturation. Removes nucleotide residues following the 3'-CCA terminus of tRNAs; can also add nucleotides to the ends of RNA molecules by using nucleoside diphosphates as substrates, but this may not be physiologically important. Probably plays a role in initiation of 16S rRNA degradation (leading to ribosome degradation) during starvation. The chain is Ribonuclease PH from Dichelobacter nodosus (strain VCS1703A).